The chain runs to 166 residues: Regulator of ribonuclease activity A (166 aa).

Belongs to the RraA family. As to quaternary structure, homotrimer. Binds to both RNA-binding sites in the C-terminal region of Rne and to RhlB.

It is found in the cytoplasm. Globally modulates RNA abundance by binding to RNase E (Rne) and regulating its endonucleolytic activity. Can modulate Rne action in a substrate-dependent manner by altering the composition of the degradosome. Modulates RNA-binding and helicase activities of the degradosome. The sequence is that of Regulator of ribonuclease activity A from Histophilus somni (strain 129Pt) (Haemophilus somnus).